An 876-amino-acid chain; its full sequence is Alanine--tRNA ligase (876 aa).

His-568, His-572, Cys-670, and His-674 together coordinate Zn(2+).

The protein belongs to the class-II aminoacyl-tRNA synthetase family. It depends on Zn(2+) as a cofactor.

The protein resides in the cytoplasm. The enzyme catalyses tRNA(Ala) + L-alanine + ATP = L-alanyl-tRNA(Ala) + AMP + diphosphate. Its function is as follows. Catalyzes the attachment of alanine to tRNA(Ala) in a two-step reaction: alanine is first activated by ATP to form Ala-AMP and then transferred to the acceptor end of tRNA(Ala). Also edits incorrectly charged Ser-tRNA(Ala) and Gly-tRNA(Ala) via its editing domain. This chain is Alanine--tRNA ligase, found in Geotalea uraniireducens (strain Rf4) (Geobacter uraniireducens).